The sequence spans 845 residues: ATP-binding cassette sub-family F member 1 (845 aa).

Positions 1–261 (MPKAPKQQPP…HLSKKEKKKL (261 aa)) are disordered. Phosphoserine occurs at positions 22 and 24. Residues 29–39 (KKGKKDKKIKK) show a composition bias toward basic residues. Positions 47–64 (VEDKQAGEEEKVLKEKEQ) are enriched in basic and acidic residues. The span at 73–85 (QKKKRDTRKGRRK) shows a compositional bias: basic residues. Serine 105 carries the phosphoserine modification. Threonine 108 carries the post-translational modification Phosphothreonine. Residues serine 109 and serine 140 each carry the phosphoserine; by CK2 modification. Residues 147–160 (EKHPPKPAKPEKNR) show a composition bias toward basic and acidic residues. A Phosphoserine modification is found at serine 166. Basic and acidic residues predominate over residues 206–226 (EIIKEKEPPKQGKEKAKKAEQ). The segment covering 227–241 (GSEEEGEGEEEEEEG) has biased composition (acidic residues). Serine 228 bears the Phosphoserine mark. Residues 304-548 (IKLEKFSISA…MYQQKQKELL (245 aa)) form the ABC transporter 1 domain. Position 336–343 (336–343 (GPNGKGKT)) interacts with ATP. Residues 559 to 580 (KELKAGGKSTKQAEKQTKEALT) show a composition bias toward basic and acidic residues. Positions 559 to 602 (KELKAGGKSTKQAEKQTKEALTRKQQKCRRKNQDEESQEAPELL) are disordered. Serine 595 carries the phosphoserine modification. One can recognise an ABC transporter 2 domain in the interval 625 to 840 (LGLHGVTFGY…VLEALGEVMV (216 aa)). Residue 658 to 665 (GPNGVGKS) participates in ATP binding.

Belongs to the ABC transporter superfamily. ABCF family. EF3 subfamily. In terms of assembly, isoform 2 interacts (via N-terminus) with EIF2S1; the interaction is independent of its phosphorylated status. Isoform 2 associates (via both ABC transporter domains) with the ribosomes. In terms of processing, isoform 2 is phosphorylated at phosphoserine and phosphothreonine. Isoform 2 phosphorylation on Ser-109 and Ser-140 by CK2 inhibits association of EIF2 with ribosomes. In terms of tissue distribution, ubiquitous.

The protein resides in the cytoplasm. It is found in the nucleus. Its subcellular location is the nucleoplasm. The protein localises to the nucleus envelope. Its function is as follows. Isoform 2 is required for efficient Cap- and IRES-mediated mRNA translation initiation. Isoform 2 is not involved in the ribosome biogenesis. The chain is ATP-binding cassette sub-family F member 1 (ABCF1) from Homo sapiens (Human).